The sequence spans 226 residues: Large ribosomal subunit protein mL67 (226 aa).

This sequence belongs to the mitochondrion-specific ribosomal protein mL67 family. Component of the mitochondrial large ribosomal subunit (mt-LSU). Mature yeast 74S mitochondrial ribosomes consist of a small (37S) and a large (54S) subunit. The 37S small subunit contains a 15S ribosomal RNA (15S mt-rRNA) and 34 different proteins. The 54S large subunit contains a 21S rRNA (21S mt-rRNA) and 46 different proteins.

It localises to the nucleus. The protein resides in the mitochondrion. In terms of biological role, component of the mitochondrial ribosome (mitoribosome), a dedicated translation machinery responsible for the synthesis of mitochondrial genome-encoded proteins, including at least some of the essential transmembrane subunits of the mitochondrial respiratory chain. The mitoribosomes are attached to the mitochondrial inner membrane and translation products are cotranslationally integrated into the membrane. mL67/MHR1 also has extraribosomal functions, being involved in regulation of mitochondrial DNA recombination, maintenance and repair, and generation of homoplasmic cells. mL67/MHR1 also acts as transcription factor involved in regulation of RNA polymerase II-dependent transcription. The polypeptide is Large ribosomal subunit protein mL67 (MHR1) (Saccharomyces cerevisiae (strain ATCC 204508 / S288c) (Baker's yeast)).